Reading from the N-terminus, the 253-residue chain is Salivary gland SP38-40.B protein (253 aa).

Residues 1 to 21 form the signal peptide; sequence MRIKFLVVLAVICLLAHYASA. Disordered regions lie at residues 23–51, 140–168, and 203–253; these read GMGGDKKPKDAPKPKDAPKPKEVKPVKAD, KDEKKEKKVVKVIKPPKEKPPKKPRKECS, and VQGK…DAKK. Basic and acidic residues-rich tracts occupy residues 26-51 and 154-168; these read GDKKPKDAPKPKDAPKPKEVKPVKAD and PPKEKPPKKPRKECS. Tandem repeats lie at residues 29-34 and 35-40. Positions 29–47 are 3 X 6 AA approximate tandem repeats of K-P-K-D-A-P; the sequence is KPKDAPKPKDAPKPKEVKP. The stretch at 41 to 47 is one 1-3; approximate repeat; that stretch reads KPKEVKP. 2 repeat units span residues 153–156 and 158–161. The 3 X 4 AA approximate tandem repeats of K-P-P-K stretch occupies residues 153–166; the sequence is KPPKEKPPKKPRKE. One copy of the 2-3; approximate repeat lies at 162–166; sequence KPRKE. Basic residues predominate over residues 206–217; it reads KQKKGAKKAKGG. Tandem repeats lie at residues 222-225, 226-229, 230-233, 234-237, 238-241, and 242-245. Residues 222 to 249 form a 7 X 4 AA approximate tandem repeats of P-K-P-[GAV] region; sequence PKPGPKPAPKPGPKPAPKPVPKPADKPK. The segment covering 225–243 has biased composition (pro residues); that stretch reads GPKPAPKPGPKPAPKPVPK. Residues 244–253 show a composition bias toward basic and acidic residues; it reads PADKPKDAKK. One copy of the 3-7; approximate repeat lies at 246 to 249; the sequence is DKPK.

As to expression, salivary gland.

It is found in the secreted. Its function is as follows. Used by the larvae to construct a supramolecular structure, the larval tube. This Chironomus tentans (Midge) protein is Salivary gland SP38-40.B protein (SP38-40.B).